Consider the following 1079-residue polypeptide: Ubiquitin carboxyl-terminal hydrolase 26 (1079 aa).

Positions M1–R12 are enriched in basic residues. The segment at M1 to P21 is disordered. In terms of domain architecture, USP spans A106–I446. Residue C115 is the Nucleophile of the active site. Residue H359 is the Proton acceptor of the active site. The disordered stretch occupies residues G384–S419. Residues F388 to Q401 are compositionally biased toward basic and acidic residues. Residues K402–N417 show a composition bias toward polar residues. DUSP domains follow at residues A495–C598, D613–D715, and A738–V862. Residues E948–S972 are disordered. One can recognise a Ubiquitin-like domain in the interval S961–E1037.

It belongs to the peptidase C19 family.

It localises to the nucleus. It catalyses the reaction Thiol-dependent hydrolysis of ester, thioester, amide, peptide and isopeptide bonds formed by the C-terminal Gly of ubiquitin (a 76-residue protein attached to proteins as an intracellular targeting signal).. Functionally, recognizes and hydrolyzes the peptide bond at the C-terminal Gly of ubiquitin. Involved in the processing of poly-ubiquitin precursors as well as that of ubiquitinated proteins. Deubiquitinates H2BK143ub1 of histone H2B. The protein is Ubiquitin carboxyl-terminal hydrolase 26 (UBP26) of Oryza sativa subsp. japonica (Rice).